A 573-amino-acid chain; its full sequence is MSLKINKLKYASMYGPTKGDKIRLADTDIIVEIEKDFTVYGDENKFGGGKTIRDGMAQSSTATRDQGVLDLVITNATIIDHWGIVKADIGIKDGKIAGIGKAGNPDTMDGVEPHMIIGASTEAHGGENLIVTAGGIDTHIHFISPQQIETALYSGVTTMIGGGTGPADGTNATTITPGKWYIEKMLQAAEAFPMNLGFFGKGNCSTEAPLDEQIEAGALGLKIHEDWGASPAVIDASLKVADKYDVQVAIHTDTLNEAGFLEDTMNAINGRVIHTFHTEGAGGGHAPDIIKAAMYPNVLPASTNPTRPYTVNTIDEHLDMLMVCHHLSKNIPEDVSFADSRIRPETIAAEDILHDMGVFSIMSSDSQAMGRVGEVVTRTWQTADKMRKQRGDLAEDKGNKNDNFRAKRYVAKYTINPAIAHGISQYVGSIEVGKMADLVLWKPMLFGTKPEIIIKGGMIIAARMGDPNASIPTPQPVLYRNMFGAFGKALSKTCATFVSQASIKNNIAEEYGLEKMILPVTGCRNISKKHLIHNDKTPEITVNPENYEVRVDGEKIICEPATHLPMAQRYFLF.

Ni(2+) is bound by residues H139, H141, and K222. K222 is subject to N6-carboxylysine. Residue H224 coordinates substrate. Residues H251 and H277 each contribute to the Ni(2+) site. Catalysis depends on H325, which acts as the Proton donor. D365 is a binding site for Ni(2+).

It belongs to the metallo-dependent hydrolases superfamily. Urease alpha subunit family. As to quaternary structure, heterotrimer of UreA (gamma), UreB (beta) and UreC (alpha) subunits. Three heterotrimers associate to form the active enzyme. Requires Ni cation as cofactor. Carboxylation allows a single lysine to coordinate two nickel ions.

It is found in the cytoplasm. It carries out the reaction urea + 2 H2O + H(+) = hydrogencarbonate + 2 NH4(+). It functions in the pathway nitrogen metabolism; urea degradation; CO(2) and NH(3) from urea (urease route): step 1/1. The chain is Urease subunit alpha from Flavobacterium johnsoniae (strain ATCC 17061 / DSM 2064 / JCM 8514 / BCRC 14874 / CCUG 350202 / NBRC 14942 / NCIMB 11054 / UW101) (Cytophaga johnsonae).